The chain runs to 498 residues: ATP synthase subunit beta, chloroplastic (498 aa).

Position 172 to 179 (172 to 179 (GGAGVGKT)) interacts with ATP.

Belongs to the ATPase alpha/beta chains family. As to quaternary structure, F-type ATPases have 2 components, CF(1) - the catalytic core - and CF(0) - the membrane proton channel. CF(1) has five subunits: alpha(3), beta(3), gamma(1), delta(1), epsilon(1). CF(0) has four main subunits: a(1), b(1), b'(1) and c(9-12).

Its subcellular location is the plastid. It localises to the chloroplast thylakoid membrane. It catalyses the reaction ATP + H2O + 4 H(+)(in) = ADP + phosphate + 5 H(+)(out). Its function is as follows. Produces ATP from ADP in the presence of a proton gradient across the membrane. The catalytic sites are hosted primarily by the beta subunits. The sequence is that of ATP synthase subunit beta, chloroplastic from Pelargonium hortorum (Common geranium).